Consider the following 706-residue polypeptide: Vitamin B12-dependent ribonucleoside-diphosphate reductase (706 aa).

Residues 21–109 (AKVRRRDGTL…IYRQRRAELR (89 aa)) form the ATP-cone domain. Residues Ser191, 206–207 (GC), Gly235, 389–393 (NPCGE), and 534–538 (PTGTI) contribute to the substrate site. Cys207 and Cys402 are disulfide-bonded. The active-site Proton acceptor is the Asn389. Cys391 functions as the Cysteine radical intermediate in the catalytic mechanism. Glu393 functions as the Proton acceptor in the catalytic mechanism.

Belongs to the ribonucleoside diphosphate reductase class-2 family. Requires adenosylcob(III)alamin as cofactor.

It catalyses the reaction a 2'-deoxyribonucleoside 5'-diphosphate + [thioredoxin]-disulfide + H2O = a ribonucleoside 5'-diphosphate + [thioredoxin]-dithiol. Functionally, provides the precursors necessary for DNA synthesis. Catalyzes the biosynthesis of deoxyribonucleotides from the corresponding ribonucleotides. In Mycobacterium tuberculosis (strain ATCC 25618 / H37Rv), this protein is Vitamin B12-dependent ribonucleoside-diphosphate reductase (nrdZ).